A 96-amino-acid polypeptide reads, in one-letter code: DNA-binding protein Saci_1468 (96 aa).

It belongs to the PDCD5 family.

The sequence is that of DNA-binding protein Saci_1468 from Sulfolobus acidocaldarius (strain ATCC 33909 / DSM 639 / JCM 8929 / NBRC 15157 / NCIMB 11770).